We begin with the raw amino-acid sequence, 442 residues long: MSITTTMTSVPIFESVSRFLPPGNEDEQFWWKITGRHMARMMHEAGYPEDRQVECLLFHRFKVVPCLGPRPHSDTPWYKSRVGGGAADGCPINYSWRFGTSDRRPHNRNFIEPLGALTNTSADPLNEVATKALLHDYSMTLPNVDLEAFWTFAPHYRPRIIEKADMEKLAGASLLVGAEMSPDSRTIDIKAYMYPRVPSQTSQLLTTILPQAMRDAYGEDVCLDSLNFVHDFMTKDPQGCQLVLTGTTGIDCCKLQDTRVKIYVITRNTSFDHIAAIMTLGGRRPISEELLGQLKALWYELKGAPAELPSSEQLPVQTKPDRSKNPIVVPFYFDIQPRLELPDVKAYIDVSTSPVSDLAAANAVVCHLEQHGSGQNPKAYLNVLKDITPVEALETQKGALAFYSVAVKKNELDITSYFNPQVYKRYFAHEVQLNGQRRSVFE.

It belongs to the tryptophan dimethylallyltransferase family.

It participates in secondary metabolite biosynthesis. In terms of biological role, prenyltransferase; part of the gene cluster that mediates the biosynthesis of neosartoricin B, a prenylated anthracenone that probably exhibits T-cell antiproliferative activity, suggestive of a physiological role as an immunosuppressive agent. The non-reducing polyketide synthase nscA probably synthesizes and cyclizes the decaketide backbone. The hydrolase nscB then mediates the product release through hydrolysis followed by spontaneous decarboxylation. The prenyltransferase nscD catalyzes the addition of the dimethylallyl group to the aromatic C5. The FAD-dependent monooxygenase nscC is then responsible for the stereospecific hydroxylation at C2. Neosartoricin B can be converted into two additional compounds neosartoricins C and D. Neosartoricin C is a spirocyclic compound that is cyclized through the attack of C3 hydroxyl on C14, followed by dehydration. On the other hand, neosartoricin D is a further cyclized compound in which attack of C2 on C14 in neosartoricin C results in the formation of the acetal-containing dioxabicyclo-octanone ring. Both of these compounds are novel and possibly represent related metabolites of the gene cluster. This Trichophyton verrucosum (strain HKI 0517) protein is Prenyltransferase nscD.